Reading from the N-terminus, the 218-residue chain is uncharacterized protein (218 aa).

Disordered stretches follow at residues 30–71 (FSHR…RSPP), 93–120 (SGRGGGGGGGGGARTGGGEGEDRRPRPD), and 133–209 (MEVE…PGFP). Residues 43–71 (PGAPAVVPAPVSAPRPASSPARSESRSPP) are compositionally biased toward low complexity. Gly residues predominate over residues 94 to 110 (GRGGGGGGGGGARTGGG). A compositionally biased stretch (pro residues) spans 138-148 (PPHPPPQPQVC). Residues 156–171 (PGHGRAGLPEGKGPGG) are compositionally biased toward gly residues. The span at 191–209 (RAPSPAAPRRGRLPAPGFP) shows a compositional bias: low complexity.

This is an uncharacterized protein from Homo sapiens (Human).